A 133-amino-acid polypeptide reads, in one-letter code: MQRITITLDDDLLETLDSLSQRRGYNNRSEAIRDILRSALAQEATQQHGTQGFAVLSYVYEHEKRDLASRIVSTQHHHHDLSVATLHVHINHDDCLEIAVLKGDMGDVQHFADDVIAQRGVRHGHLQCLPKED.

Ni(2+)-binding residues include His76, His87, His89, and Cys95.

It belongs to the transcriptional regulatory CopG/NikR family. As to quaternary structure, homotetramer. The cofactor is Ni(2+).

Its function is as follows. Transcriptional repressor of the nikABCDE operon. Is active in the presence of excessive concentrations of intracellular nickel. This chain is Nickel-responsive regulator, found in Escherichia coli (strain SMS-3-5 / SECEC).